Consider the following 356-residue polypeptide: Ferrochelatase (356 aa).

H214 and E295 together coordinate Fe cation.

Belongs to the ferrochelatase family.

It is found in the cytoplasm. It carries out the reaction heme b + 2 H(+) = protoporphyrin IX + Fe(2+). It participates in porphyrin-containing compound metabolism; protoheme biosynthesis; protoheme from protoporphyrin-IX: step 1/1. In terms of biological role, catalyzes the ferrous insertion into protoporphyrin IX. In Paraburkholderia phytofirmans (strain DSM 17436 / LMG 22146 / PsJN) (Burkholderia phytofirmans), this protein is Ferrochelatase.